Reading from the N-terminus, the 215-residue chain is Glutathione S-transferase D2 (215 aa).

One can recognise a GST N-terminal domain in the interval 1 to 80; that stretch reads MDFYYMPGGG…YLVEKYGKDD (80 aa). Glutathione contacts are provided by residues 50-52 and 64-66; these read HTI and ESR. The GST C-terminal domain occupies 86–212; sequence DPKKRAVINQ…MKALFDARKL (127 aa).

This sequence belongs to the GST superfamily. Delta family. Homodimer.

The catalysed reaction is RX + glutathione = an S-substituted glutathione + a halide anion + H(+). Conjugation of reduced glutathione to a wide number of exogenous and endogenous hydrophobic electrophiles. May be involved in detoxification. In Drosophila melanogaster (Fruit fly), this protein is Glutathione S-transferase D2.